The primary structure comprises 506 residues: Dual specificity protein kinase shkC (506 aa).

Residues 1–21 (MDSGLGSSYPEERSGPPEIRP) are disordered. Over residues 10-21 (PEERSGPPEIRP) the composition is skewed to basic and acidic residues. The Protein kinase domain maps to 24-284 (INFEELIGTG…IISALDHVII (261 aa)). Residues 30-38 (IGTGSFGKV) and K51 contribute to the ATP site. D147 (proton acceptor) is an active-site residue. Residues 396–488 (WFHGDLDTTE…KLDSQLGVPN (93 aa)) enclose the SH2 domain.

The protein belongs to the protein kinase superfamily. TKL Ser/Thr protein kinase family. SH2 domain-containing protein kinase subfamily.

It localises to the membrane. The enzyme catalyses L-seryl-[protein] + ATP = O-phospho-L-seryl-[protein] + ADP + H(+). The catalysed reaction is L-threonyl-[protein] + ATP = O-phospho-L-threonyl-[protein] + ADP + H(+). In terms of biological role, required for proper chemotaxis and phagocytosis; proper spatiotemporal control of F-actin levels in chemotaxing cells. Negative regulator of the PI3K (phosphatidylinositol 3 kinase) pathway. Predominantly phosphorylates serines and threonines and tyrosines at a lower level. The sequence is that of Dual specificity protein kinase shkC (shkC) from Dictyostelium discoideum (Social amoeba).